Consider the following 270-residue polypeptide: Undecaprenyl-diphosphatase 1 (270 aa).

Transmembrane regions (helical) follow at residues 5–25 (YYVL…PIPI), 42–62 (IEGF…VLLI), 89–109 (FFFI…GVLF), 117–137 (LKGV…LWII), 192–212 (FSFL…ITDI), 220–240 (TLFV…YISL), and 250–270 (GNLK…LIFL).

Belongs to the UppP family.

The protein localises to the cell membrane. It carries out the reaction di-trans,octa-cis-undecaprenyl diphosphate + H2O = di-trans,octa-cis-undecaprenyl phosphate + phosphate + H(+). In terms of biological role, catalyzes the dephosphorylation of undecaprenyl diphosphate (UPP). Confers resistance to bacitracin. The sequence is that of Undecaprenyl-diphosphatase 1 from Bacillus cereus (strain ATCC 14579 / DSM 31 / CCUG 7414 / JCM 2152 / NBRC 15305 / NCIMB 9373 / NCTC 2599 / NRRL B-3711).